A 336-amino-acid chain; its full sequence is Spore photoproduct lyase (336 aa).

The 232-residue stretch at 74–305 (CKPSANYQLP…KFGQFGYGKY (232 aa)) folds into the Radical SAM core domain. The [4Fe-4S] cluster site is built by C88, C92, and C95. The segment at residues 215 to 232 (ESAYNILNSGYKTGFIVG) is a DNA-binding region (H-T-H motif).

Belongs to the radical SAM superfamily. SPL family. As to quaternary structure, monomer or homodimer. [4Fe-4S] cluster is required as a cofactor. The cofactor is S-adenosyl-L-methionine.

The catalysed reaction is (5R)-5,6-dihydro-5-(thymidin-7-yl)thymidine in DNA = a thymidine dimer in DNA. Involved in repair of UV radiation-induced DNA damage during spore germination. Can repair thymine dimer 5-thyminyl-5,6-dihydrothymine (known as spore photoproduct (SP)) by in situ monomerization of SP to two thymines. The protein is Spore photoproduct lyase (splB) of Clostridium acetobutylicum (strain ATCC 824 / DSM 792 / JCM 1419 / IAM 19013 / LMG 5710 / NBRC 13948 / NRRL B-527 / VKM B-1787 / 2291 / W).